A 159-amino-acid polypeptide reads, in one-letter code: Peptide deformylase (159 aa).

Fe cation is bound by residues cysteine 88 and histidine 130. Glutamate 131 is a catalytic residue. Histidine 134 contributes to the Fe cation binding site.

It belongs to the polypeptide deformylase family. The cofactor is Fe(2+).

The enzyme catalyses N-terminal N-formyl-L-methionyl-[peptide] + H2O = N-terminal L-methionyl-[peptide] + formate. In terms of biological role, removes the formyl group from the N-terminal Met of newly synthesized proteins. Requires at least a dipeptide for an efficient rate of reaction. N-terminal L-methionine is a prerequisite for activity but the enzyme has broad specificity at other positions. The polypeptide is Peptide deformylase (Caldanaerobacter subterraneus subsp. tengcongensis (strain DSM 15242 / JCM 11007 / NBRC 100824 / MB4) (Thermoanaerobacter tengcongensis)).